The following is a 396-amino-acid chain: Subtilisin-like protease 5 (396 aa).

The first 20 residues, 1-20 (MTGFFTILSFSLAALSVTNA), serve as a signal peptide directing secretion. The propeptide occupies 21–116 (AQILSVPKGA…VEPDAIISQH (96 aa)). An Inhibitor I9 domain is found at 37 to 113 (YIVVMKDDTS…VAFVEPDAII (77 aa)). An N-linked (GlcNAc...) asparagine glycan is attached at asparagine 63. The region spanning 125–396 (PWGLSRLSNR…TRLLYNGSGR (272 aa)) is the Peptidase S8 domain. Residues aspartate 156 and histidine 187 each act as charge relay system in the active site. Asparagine 230 and asparagine 248 each carry an N-linked (GlcNAc...) asparagine glycan. Serine 342 serves as the catalytic Charge relay system. The span at 377–389 (TIRNPGPDTTTRL) shows a compositional bias: polar residues. The tract at residues 377-396 (TIRNPGPDTTTRLLYNGSGR) is disordered. Asparagine 392 is a glycosylation site (N-linked (GlcNAc...) asparagine).

The protein belongs to the peptidase S8 family.

The protein localises to the secreted. In terms of biological role, secreted subtilisin-like serine protease with keratinolytic activity that contributes to pathogenicity. The sequence is that of Subtilisin-like protease 5 (SUB5) from Arthroderma benhamiae (Trichophyton mentagrophytes).